Reading from the N-terminus, the 253-residue chain is Ubiquinone biosynthesis O-methyltransferase (253 aa).

The S-adenosyl-L-methionine site is built by arginine 47, glycine 78, aspartate 99, and methionine 141.

Belongs to the methyltransferase superfamily. UbiG/COQ3 family.

The enzyme catalyses a 3-demethylubiquinol + S-adenosyl-L-methionine = a ubiquinol + S-adenosyl-L-homocysteine + H(+). It carries out the reaction a 3-(all-trans-polyprenyl)benzene-1,2-diol + S-adenosyl-L-methionine = a 2-methoxy-6-(all-trans-polyprenyl)phenol + S-adenosyl-L-homocysteine + H(+). Its pathway is cofactor biosynthesis; ubiquinone biosynthesis. Functionally, O-methyltransferase that catalyzes the 2 O-methylation steps in the ubiquinone biosynthetic pathway. The sequence is that of Ubiquinone biosynthesis O-methyltransferase from Bradyrhizobium sp. (strain ORS 278).